The primary structure comprises 429 residues: Probable M18 family aminopeptidase 2 (429 aa).

The Zn(2+) site is built by histidine 82, histidine 156, and histidine 401.

The protein belongs to the peptidase M18 family. It depends on Zn(2+) as a cofactor.

The chain is Probable M18 family aminopeptidase 2 from Pseudomonas aeruginosa (strain UCBPP-PA14).